Reading from the N-terminus, the 186-residue chain is Holliday junction branch migration complex subunit RuvA (186 aa).

The segment at 1–61 (MYSYIKGKVV…ENLQILYGFN (61 aa)) is domain I. The tract at residues 62 to 134 (DNKNLLFFKK…LKGDLIFSEK (73 aa)) is domain II. A flexible linker region spans residues 134-135 (KI). Residues 136-186 (ILNPKKTELEKILLNLGFVKKEIKSVLNQIDDKKELELMLKEVLLKLAKNI) form a domain III region.

The protein belongs to the RuvA family. Homotetramer. Forms an RuvA(8)-RuvB(12)-Holliday junction (HJ) complex. HJ DNA is sandwiched between 2 RuvA tetramers; dsDNA enters through RuvA and exits via RuvB. An RuvB hexamer assembles on each DNA strand where it exits the tetramer. Each RuvB hexamer is contacted by two RuvA subunits (via domain III) on 2 adjacent RuvB subunits; this complex drives branch migration. In the full resolvosome a probable DNA-RuvA(4)-RuvB(12)-RuvC(2) complex forms which resolves the HJ.

The protein localises to the cytoplasm. Functionally, the RuvA-RuvB-RuvC complex processes Holliday junction (HJ) DNA during genetic recombination and DNA repair, while the RuvA-RuvB complex plays an important role in the rescue of blocked DNA replication forks via replication fork reversal (RFR). RuvA specifically binds to HJ cruciform DNA, conferring on it an open structure. The RuvB hexamer acts as an ATP-dependent pump, pulling dsDNA into and through the RuvAB complex. HJ branch migration allows RuvC to scan DNA until it finds its consensus sequence, where it cleaves and resolves the cruciform DNA. This Phytoplasma mali (strain AT) protein is Holliday junction branch migration complex subunit RuvA.